Reading from the N-terminus, the 361-residue chain is P2Y purinoceptor 4 (361 aa).

The Extracellular segment spans residues 1-30; that stretch reads MTSADSLLFTSLGPSPSSGDGDCKFNEEFK. A helical membrane pass occupies residues 31 to 58; sequence FILLPLSYAVVFVLGLALNAPTLWLFLF. Topologically, residues 59–68 are cytoplasmic; it reads RLRPWDATAT. A helical transmembrane segment spans residues 69–91; sequence YMFHLALSDTLYVLSLPTLVYYY. At 92 to 108 the chain is on the extracellular side; the sequence is AARNHWPFGTGFCKFVR. An intrachain disulfide couples Cys-104 to Cys-181. The helical transmembrane segment at 109–127 threads the bilayer; the sequence is FLFYWNLYCSVLFLTCISV. The Cytoplasmic portion of the chain corresponds to 128 to 149; that stretch reads HRYMGICHPLRAIRWGRPRFAG. The chain crosses the membrane as a helical span at residues 150–170; the sequence is LLCLGVWLVVAGCLVPNLFFV. Residues 171–192 lie on the Extracellular side of the membrane; sequence TTNANGTTILCHDTTLPEEFDH. Asn-175 carries an N-linked (GlcNAc...) asparagine glycan. The helical transmembrane segment at 193–218 threads the bilayer; that stretch reads YVYFSSTIMVLLFGFPFLITLVCYGL. Over 219–242 the chain is Cytoplasmic; that stretch reads MARRLYRPLPGAGQSSSRLRSLRT. Residues 243–265 form a helical membrane-spanning segment; the sequence is IAVVLTVFAVCFVPFHITRTIYY. The Extracellular segment spans residues 266-283; it reads LARLLNAECRVLNIVNVV. The chain crosses the membrane as a helical span at residues 284 to 305; sequence YKVTRPLASANSCLDPVLYLFT. At 306–361 the chain is on the cytoplasmic side; the sequence is GDKYRNQLQQLCRGSTPKRRTTASSLALVTLHEESISRWADIHQDSIFPAYEGDRL.

The protein belongs to the G-protein coupled receptor 1 family. In terms of processing, phosphorylation of Ser-329 and Ser-330 is a key step in agonist-dependent desensitization and loss of surface P2RY4. This phosphorylation does not involve PKC, nor other calcium-activated kinases. As to expression, expressed in the liver, intestine, stomach, bladder and lung.

The protein resides in the cell membrane. Receptor for ATP and UTP coupled to G-proteins that activate a phosphatidylinositol-calcium second messenger system. The chain is P2Y purinoceptor 4 (P2ry4) from Mus musculus (Mouse).